Reading from the N-terminus, the 229-residue chain is Aquaporin Z (229 aa).

2 consecutive transmembrane segments (helical) span residues 8 to 28 (FLGTFWLVLGGCGSAVLAAGF) and 33 to 53 (IGFAGVALAFGLTVVTMAYAI). An NPA 1 motif is present at residues 62 to 64 (NPA). 3 helical membrane passes run 88–108 (VLGAIAAGAVLYVIASGGAGF), 129–149 (LLAALVCEVVMTMFFLLVIMG), and 158–178 (GFAPLAIGLALTLIHLISIPV). Residues 184-186 (NPA) carry the NPA 2 motif. Residues 192–212 (ALFVGGWAVQQLWLFWLAPII) form a helical membrane-spanning segment.

Belongs to the MIP/aquaporin (TC 1.A.8) family. In terms of assembly, homotetramer.

It localises to the cell inner membrane. The catalysed reaction is H2O(in) = H2O(out). Functionally, channel that permits osmotically driven movement of water in both directions. It is involved in the osmoregulation and in the maintenance of cell turgor during volume expansion in rapidly growing cells. It mediates rapid entry or exit of water in response to abrupt changes in osmolarity. The protein is Aquaporin Z of Chromobacterium violaceum (strain ATCC 12472 / DSM 30191 / JCM 1249 / CCUG 213 / NBRC 12614 / NCIMB 9131 / NCTC 9757 / MK).